Here is a 132-residue protein sequence, read N- to C-terminus: ATP synthase epsilon chain (132 aa).

The protein belongs to the ATPase epsilon chain family. F-type ATPases have 2 components, CF(1) - the catalytic core - and CF(0) - the membrane proton channel. CF(1) has five subunits: alpha(3), beta(3), gamma(1), delta(1), epsilon(1). CF(0) has three main subunits: a, b and c.

The protein localises to the cell membrane. Functionally, produces ATP from ADP in the presence of a proton gradient across the membrane. This Bacillus velezensis (strain DSM 23117 / BGSC 10A6 / LMG 26770 / FZB42) (Bacillus amyloliquefaciens subsp. plantarum) protein is ATP synthase epsilon chain.